A 305-amino-acid polypeptide reads, in one-letter code: UDP-N-acetylenolpyruvoylglucosamine reductase (305 aa).

The 180-residue stretch at 35-214 (VGGPAQALFT…RARMNEVQAH (180 aa)) folds into the FAD-binding PCMH-type domain. Arg-179 is a catalytic residue. Ser-228 acts as the Proton donor in catalysis. Glu-298 is a catalytic residue.

Belongs to the MurB family. Requires FAD as cofactor.

Its subcellular location is the cytoplasm. It carries out the reaction UDP-N-acetyl-alpha-D-muramate + NADP(+) = UDP-N-acetyl-3-O-(1-carboxyvinyl)-alpha-D-glucosamine + NADPH + H(+). It functions in the pathway cell wall biogenesis; peptidoglycan biosynthesis. Cell wall formation. In Nitrobacter winogradskyi (strain ATCC 25391 / DSM 10237 / CIP 104748 / NCIMB 11846 / Nb-255), this protein is UDP-N-acetylenolpyruvoylglucosamine reductase.